The primary structure comprises 106 residues: MNGRNNDMGRNGGADYDDRDFGRTPDLNADAPGRRRTGRKRVCRYCADKALVIDYKDPQALKYFISERGKVVPRRISGNCARHQRKVTLSIKRARNIALLPFTVTA.

A disordered region spans residues 1-39 (MNGRNNDMGRNGGADYDDRDFGRTPDLNADAPGRRRTGR).

Belongs to the bacterial ribosomal protein bS18 family. Part of the 30S ribosomal subunit. Forms a tight heterodimer with protein bS6.

Functionally, binds as a heterodimer with protein bS6 to the central domain of the 16S rRNA, where it helps stabilize the platform of the 30S subunit. This chain is Small ribosomal subunit protein bS18, found in Sorangium cellulosum (strain So ce56) (Polyangium cellulosum (strain So ce56)).